We begin with the raw amino-acid sequence, 335 residues long: Foldase protein PrsA (335 aa).

An N-terminal signal peptide occupies residues 1–20 (MKKKIFAGAVTLLSVAVLAA). Residue cysteine 21 is the site of N-palmitoyl cysteine attachment. Residue cysteine 21 is the site of S-diacylglycerol cysteine attachment. The region spanning 142 to 239 (TPEVTAQIIK…ASYYIVKLVK (98 aa)) is the PpiC domain. Residues 300-335 (TGSSTSSSSAASSSKTSESSSAAESSSKEASSSAAE) form a disordered region. Residues 302–335 (SSTSSSSAASSSKTSESSSAAESSSKEASSSAAE) are compositionally biased toward low complexity.

This sequence belongs to the PrsA family.

It is found in the cell membrane. It carries out the reaction [protein]-peptidylproline (omega=180) = [protein]-peptidylproline (omega=0). Functionally, plays a major role in protein secretion by helping the post-translocational extracellular folding of several secreted proteins. The protein is Foldase protein PrsA of Streptococcus sanguinis (strain SK36).